A 241-amino-acid chain; its full sequence is Small ribosomal subunit protein bS6 (241 aa).

Residues 97–108 are compositionally biased toward basic residues; the sequence is KPKIRERNRKYT. Residues 97 to 241 are disordered; sequence KPKIRERNRK…YNNKKPQSSN (145 aa). The segment covering 109–118 has biased composition (basic and acidic residues); sequence PRRDRFEKPN. Composition is skewed to low complexity over residues 130 to 151 and 161 to 182; these read QDQQ…QTSQ and DDFQ…NQSG. The segment covering 189–202 has biased composition (polar residues); it reads RQNQENIHQNSKNH.

The protein belongs to the bacterial ribosomal protein bS6 family.

Binds together with bS18 to 16S ribosomal RNA. In Mesomycoplasma hyopneumoniae (strain 232) (Mycoplasma hyopneumoniae), this protein is Small ribosomal subunit protein bS6.